The sequence spans 551 residues: Formate--tetrahydrofolate ligase (551 aa).

54 to 61 (TPPGEGKT) contributes to the ATP binding site.

Belongs to the formate--tetrahydrofolate ligase family.

The enzyme catalyses (6S)-5,6,7,8-tetrahydrofolate + formate + ATP = (6R)-10-formyltetrahydrofolate + ADP + phosphate. The protein operates within one-carbon metabolism; tetrahydrofolate interconversion. This chain is Formate--tetrahydrofolate ligase, found in Myxococcus xanthus (strain DK1622).